Reading from the N-terminus, the 698-residue chain is MANTREFSLDKTRNIGIMAHIDAGKTTTTERILYYTGKIHKIGETHDGASQMDWMAQEQERGITITSAATTAQWKNHRINIIDTPGHVDFTVEVERSLRVLDGAIAVLDAQSGVEPQTETVWRQASTYNVPRIVFVNKMDKIGADFKYSVSTIHDRLQANAHAIQLPIGAEDNFEGVIDLIEMKADLYDEDQLGTEWDTVDVPDEYKEEAQAARDDLIEALADIDDGIMEKYLGGEEISKEEIKAAIRKGTLALEFFPVLAGSAFKNKGVQMLMDAVVDYLPSPLDVKPYKATDPETEEEVDLIAGDDKPFAALAFKVATDPFVGRLTFIRVYQGTLESGSYVLNATKDKRERVGRLLQMHSNQRKEIPEVFSGDIAAAIGLKNTTTGDSLTSIEHPYHLESMEFPDPVIQVAVEPKTKADQDKMNVALQKLSEEDPTFKAETNPETGETLIAGMGELHLDIIVDRMRREFNVEATVGAPQVSYRETFTKSTQVQGKFVHQSGGKGQYGDVWVEFTPNEEGKGFEFEDAIVGGVVPREYIPSVEQGLKEAMANGVLAGYPLVDVKAKLYDGSYHDVDSSEAAFKIAASLALRNAVKTAGPVILEPIMKVDIVAPEDYLGDVMGHVTARRGNIEGMEERGNAQEVHAYVPLAEMFGYATTLRSATQGRGTFTMTFDHYEKVPKSVQEDIIKKNGGTPAK.

Residues 10-285 form the tr-type G domain; that stretch reads DKTRNIGIMA…AVVDYLPSPL (276 aa). Residues 19-26, 83-87, and 137-140 each bind GTP; these read AHIDAGKT, DTPGH, and NKMD.

This sequence belongs to the TRAFAC class translation factor GTPase superfamily. Classic translation factor GTPase family. EF-G/EF-2 subfamily.

The protein localises to the cytoplasm. In terms of biological role, catalyzes the GTP-dependent ribosomal translocation step during translation elongation. During this step, the ribosome changes from the pre-translocational (PRE) to the post-translocational (POST) state as the newly formed A-site-bound peptidyl-tRNA and P-site-bound deacylated tRNA move to the P and E sites, respectively. Catalyzes the coordinated movement of the two tRNA molecules, the mRNA and conformational changes in the ribosome. This Lactiplantibacillus plantarum (strain ATCC BAA-793 / NCIMB 8826 / WCFS1) (Lactobacillus plantarum) protein is Elongation factor G.